A 361-amino-acid chain; its full sequence is MGRSKCFMDISIGGELEGRIVIELYDDVVPKTAENFRLLCTGEKGLGPNTGVPLHYKGNRFHRVIKGFMIQGGDISANDGTGGESIYGLKFDDENFELKHERKGMLSMANSGPNTNGSQFFITTTRTSHLDGKHVVFGRVTKGMGVVRSIEHVSIEEQSCPSQDVVIHDCGEIPEGADDGICDFFKDGDVYPDWPIDLNESPAELSWWMETVDFVKAHGNEHFKKQDYKMALRKYRKALRYLDICWEKEGIDEETSTALRKTKSQIFTNSAACKLKFGDAKGALLDTEFAMRDEDNNVKALFRQGQAYMALNNVDAAAESLEKALQFEPNDAGIKKEYAAVMKKIAFRDNEEKKQYRKMFV.

One can recognise a PPIase cyclophilin-type domain in the interval 7 to 172 (FMDISIGGEL…QDVVIHDCGE (166 aa)). 2 TPR repeats span residues 212-245 (VDFV…LDIC) and 298-331 (VKAL…EPND).

It belongs to the cyclophilin-type PPIase family. As to expression, expressed at low levels in seedlings, roots, shoots, leaves, stems, inflorescences, flowers and siliques, with highest levels dividing tissues.

Its subcellular location is the cytoplasm. The catalysed reaction is [protein]-peptidylproline (omega=180) = [protein]-peptidylproline (omega=0). With respect to regulation, binds cyclosporin A (CsA). CsA mediates some of its effects via an inhibitory action on PPIase. In terms of biological role, PPIases accelerate the folding of proteins. It catalyzes the cis-trans isomerization of proline imidic peptide bonds in oligopeptides. Involved in promoting the expression of the juvenile phase of vegetative development, and, to a lower extent, in regulating the positioning of floral buds, floral morphogenesis and the expression of HSPs. Collaboratively with RBL and ULT1, influences floral meristem (FM) determinacy in an AGAMOUS and SUPERMAN-dependent manner, thus contributing to the floral developmental homeostasis. The sequence is that of Peptidyl-prolyl cis-trans isomerase CYP40 from Arabidopsis thaliana (Mouse-ear cress).